Consider the following 537-residue polypeptide: Chaperonin GroEL (537 aa).

ATP-binding positions include 31–34, 87–91, glycine 415, and aspartate 495; these read TLGP and DGTTT.

This sequence belongs to the chaperonin (HSP60) family. As to quaternary structure, forms a cylinder of 14 subunits composed of two heptameric rings stacked back-to-back. Interacts with the co-chaperonin GroES.

It is found in the cytoplasm. The enzyme catalyses ATP + H2O + a folded polypeptide = ADP + phosphate + an unfolded polypeptide.. In terms of biological role, together with its co-chaperonin GroES, plays an essential role in assisting protein folding. The GroEL-GroES system forms a nano-cage that allows encapsulation of the non-native substrate proteins and provides a physical environment optimized to promote and accelerate protein folding. The chain is Chaperonin GroEL from Methanoregula boonei (strain DSM 21154 / JCM 14090 / 6A8).